Here is a 154-residue protein sequence, read N- to C-terminus: Insulin-like growth factor 1 (154 aa).

Residues 50–78 are b; that stretch reads GPETLCGAELVDALQFVCGDRGFYFNKPT. 3 cysteine pairs are disulfide-bonded: Cys-55/Cys-97, Cys-67/Cys-110, and Cys-96/Cys-101. The interval 79–90 is c; that stretch reads GYGSSSRRAPQT. Residues 91–111 form an a region; that stretch reads GIVDECCFRSCDLRRLEMYCA. A d region spans residues 112–119; the sequence is PLKAAKSA. The propeptide at 120-154 is e peptide; sequence RSVRAQRHTDMPKAQKEVHLKNTSRGSAGNKNYRM. A disordered region spans residues 121–154; sequence SVRAQRHTDMPKAQKEVHLKNTSRGSAGNKNYRM. The span at 126–139 shows a compositional bias: basic and acidic residues; the sequence is RHTDMPKAQKEVHL. Residues 140 to 154 are compositionally biased toward polar residues; the sequence is KNTSRGSAGNKNYRM.

This sequence belongs to the insulin family. In terms of assembly, forms a ternary complex with IGFR1 and ITGAV:ITGB3. Forms a ternary complex with IGFR1 and ITGA6:ITGB4. Forms a ternary complex with IGFBP3 and ALS.

The protein localises to the secreted. In terms of biological role, the insulin-like growth factors, isolated from plasma, are structurally and functionally related to insulin but have a much higher growth-promoting activity. May be a physiological regulator of [1-14C]-2-deoxy-D-glucose (2DG) transport and glycogen synthesis in osteoblasts. Stimulates glucose transport in bone-derived osteoblastic (PyMS) cells and is effective at much lower concentrations than insulin, not only regarding glycogen and DNA synthesis but also with regard to enhancing glucose uptake. May play a role in synapse maturation. Ca(2+)-dependent exocytosis of IGF1 is required for sensory perception of smell in the olfactory bulb. Acts as a ligand for IGF1R. Binds to the alpha subunit of IGF1R, leading to the activation of the intrinsic tyrosine kinase activity which autophosphorylates tyrosine residues in the beta subunit thus initiating a cascade of down-stream signaling events leading to activation of the PI3K-AKT/PKB and the Ras-MAPK pathways. Binds to integrins ITGAV:ITGB3 and ITGA6:ITGB4. Its binding to integrins and subsequent ternary complex formation with integrins and IGFR1 are essential for IGF1 signaling. Induces the phosphorylation and activation of IGFR1, MAPK3/ERK1, MAPK1/ERK2 and AKT1. As part of the MAPK/ERK signaling pathway, acts as a negative regulator of apoptosis in cardiomyocytes via promotion of STUB1/CHIP-mediated ubiquitination and degradation of ICER-type isoforms of CREM. The sequence is that of Insulin-like growth factor 1 from Ovis aries (Sheep).